Reading from the N-terminus, the 300-residue chain is Protoheme IX farnesyltransferase (300 aa).

9 consecutive transmembrane segments (helical) span residues 24–44, 48–68, 94–114, 118–138, 146–166, 172–192, 217–237, 239–259, and 278–298; these read VTQL…PGMV, VLLG…AINC, LQIL…LYTF, LTMW…TLLL, IVIG…AVTG, AWIL…VLAL, LHIL…FISG, SGAV…AYAW, and IVYL…RPVI.

This sequence belongs to the UbiA prenyltransferase family. Protoheme IX farnesyltransferase subfamily.

It localises to the cell inner membrane. The enzyme catalyses heme b + (2E,6E)-farnesyl diphosphate + H2O = Fe(II)-heme o + diphosphate. Its pathway is porphyrin-containing compound metabolism; heme O biosynthesis; heme O from protoheme: step 1/1. Its function is as follows. Converts heme B (protoheme IX) to heme O by substitution of the vinyl group on carbon 2 of heme B porphyrin ring with a hydroxyethyl farnesyl side group. This is Protoheme IX farnesyltransferase from Burkholderia thailandensis (strain ATCC 700388 / DSM 13276 / CCUG 48851 / CIP 106301 / E264).